We begin with the raw amino-acid sequence, 85 residues long: uncharacterized protein (85 aa).

This is an uncharacterized protein from Fowlpox virus (strain NVSL) (FPV).